A 465-amino-acid polypeptide reads, in one-letter code: Cysteine--tRNA ligase (465 aa).

Cys-29 lines the Zn(2+) pocket. The 'HIGH' region motif lies at 31-41 (ITPYDEVHLGH). Cys-212, His-237, and Glu-241 together coordinate Zn(2+). Residues 269–273 (KMSKS) carry the 'KMSKS' region motif. Lys-272 is a binding site for ATP.

This sequence belongs to the class-I aminoacyl-tRNA synthetase family. As to quaternary structure, monomer. Zn(2+) is required as a cofactor.

It is found in the cytoplasm. The enzyme catalyses tRNA(Cys) + L-cysteine + ATP = L-cysteinyl-tRNA(Cys) + AMP + diphosphate. In Endomicrobium trichonymphae, this protein is Cysteine--tRNA ligase.